We begin with the raw amino-acid sequence, 163 residues long: Transcription antitermination protein NusB (163 aa).

This sequence belongs to the NusB family.

In terms of biological role, involved in transcription antitermination. Required for transcription of ribosomal RNA (rRNA) genes. Binds specifically to the boxA antiterminator sequence of the ribosomal RNA (rrn) operons. This Granulibacter bethesdensis (strain ATCC BAA-1260 / CGDNIH1) protein is Transcription antitermination protein NusB.